The sequence spans 484 residues: Zinc metalloproteinase homolog-disintegrin albolatin (484 aa).

Positions Met1–Ser20 are cleaved as a signal peptide. Positions Ile21–Leu191 are excised as a propeptide. N-linked (GlcNAc...) asparagine glycans are attached at residues Asn80, Asn251, and Asn301. The Peptidase M12B domain occupies Arg194–Pro392. Intrachain disulfides connect Cys305-Cys387, Cys345-Cys369, Cys347-Cys352, Cys403-Cys422, Cys414-Cys432, Cys416-Cys427, Cys426-Cys449, Cys440-Cys446, Cys445-Cys470, and Cys458-Cys477. Positions Pro400–Gly484 constitute a Disintegrin domain. The Cell attachment site; atypical (KGD) signature appears at Lys462 to Asp464.

Belongs to the venom metalloproteinase (M12B) family. P-II subfamily. P-IIb sub-subfamily. In terms of assembly, homodimer; disulfide-linked (disintegrin). As to expression, expressed by the venom gland.

It localises to the secreted. Functionally, the function of this complete protein has not been studied, but it may be similar to the function of the disintegrin domain. A recombinant protein of this domain (409-484) inhibits collagen-induced human platelet aggregation, without having effect on ADP-induced aggregation. It may act either by blocking the binding of fibrinogen to the platelet receptor GPIIb/GPIIIa (ITGA2B/ITGB3) or by blocking the binding of collagen to the integrin alpha-2/beta-1 complex (ITGA2/ITGB1). This is Zinc metalloproteinase homolog-disintegrin albolatin from Trimeresurus albolabris (White-lipped pit viper).